A 215-amino-acid polypeptide reads, in one-letter code: Redox-sensing transcriptional repressor Rex (215 aa).

A DNA-binding region (H-T-H motif) is located at residues 18-57; that stretch reads LYHRYLKYLDESGKERVSSAELSEAVKVDSATIRRDFSYF. 92-97 serves as a coordination point for NAD(+); it reads GVGNLG.

Belongs to the transcriptional regulatory Rex family. In terms of assembly, homodimer.

The protein resides in the cytoplasm. Functionally, modulates transcription in response to changes in cellular NADH/NAD(+) redox state. The polypeptide is Redox-sensing transcriptional repressor Rex (Listeria innocua serovar 6a (strain ATCC BAA-680 / CLIP 11262)).